Reading from the N-terminus, the 417-residue chain is MGEYTLVCPCSGKTVPDHYTLNCDCGSLIRTEYAARQLTLRNLPGMWKFYDWLPASGHTDTPGTTVTYRSEGLAKELGIDLHVAFNGYWPELGADMKTCSFKELEAPPTIVRAKEHGGKAMVLASAGNTARAFSYLSTITGFPLIVVVPKQNIDRLWIPGREPGASVKLISVGGGCDYTDAINLSNRIAALPGMMPEGGAKNVARRDGMGTVMLDAAVTMKGMPDDYFQAIGSGTGGIAAWEASMRLRADGRFGSKLPRLHLAQNLPFVPMLNAWKEGRREIIPERDMPDAKKSIAEMYSDVLSNRTPPYGVGGGVFDAMKATDGLMYGITREEAVAAKKLFEAREGIDILPPAAVAVAALVQASEKGLLEGRKVVLNVTGGGQERLMKEVPIYQVEPVLEVPGPDVPMEEILKVIA.

Lys-102 is modified (N6-(pyridoxal phosphate)lysine). The pyridoxal 5'-phosphate site is built by Asn-128 and Thr-380.

The protein belongs to the threonine synthase family. Cysteate synthase subfamily. Homotrimer. Pyridoxal 5'-phosphate serves as cofactor.

The catalysed reaction is O-phospho-L-serine + sulfite + H(+) = L-cysteate + phosphate. The protein operates within cofactor biosynthesis; coenzyme M biosynthesis. Functionally, specifically catalyzes the beta-elimination of phosphate from L-phosphoserine and the beta-addition of sulfite to the dehydroalanine intermediate to produce L-cysteate. This is Cysteate synthase from Methanocella arvoryzae (strain DSM 22066 / NBRC 105507 / MRE50).